The sequence spans 256 residues: Proteasome subunit alpha-type 8 (256 aa).

This sequence belongs to the peptidase T1A family. Component of the outer alpha-ring of the 20S proteasome core which is composed of 28 subunits that are arranged in four stacked rings, resulting in a barrel-shaped structure. The catalytic chamber with the active sites is on the inside of the barrel. Interacts with canonical subunits of the spermatoproteasome, including proteasome activators PSME4 (also called PA200) and PSME3 (also called PA28-gamma). Interacts with proteasome-interacting proteins chaperones, ubiquitin ligases and ubiquitin specific proteases. Interacts with meiotic proteins cyclin dependent kinase CDK1 and the ATPase TRIP13 as well as proteins of the synaptonemal complex SIX6OS1 and SYCE3.

It is found in the nucleus. In terms of biological role, component of the spermatoproteasome, a proteasome specifically found in testis that promotes acetylation-dependent degradation of histones, thereby participating actively to the exchange of histones during spermatogenesis. The proteasome is a protein complex that degrades unneeded or damaged proteins by proteolysis, a chemical reaction that breaks peptide bonds. Required for 20S core proteasome assembly, essential for the degradation of meiotic proteins RAD51 and RPA1 at late prophase I and the progression of meiosis I during spermatogenesis. Localizes to the synaptonemal complex, a 'zipper'-like structure that holds homologous chromosome pairs in synapsis during meiotic prophase I. This is Proteasome subunit alpha-type 8 (PSMA8) from Homo sapiens (Human).